A 329-amino-acid polypeptide reads, in one-letter code: Galactosylgalactosylxylosylprotein 3-beta-glucuronosyltransferase 2 (329 aa).

The Cytoplasmic segment spans residues 1–2; it reads MK. The helical; Signal-anchor for type II membrane protein transmembrane segment at 3 to 23 threads the bilayer; sequence SALFSRFFILLPWILIVIIML. The Lumenal portion of the chain corresponds to 24–329; it reads DVDTRRPAPP…YRLDTVKIEV (306 aa). The tract at residues 45–87 is disordered; that stretch reads VGRGGARLPPRRGGPDSGPGRGWEKRNESRPHARPRPEPPLPT. A compositionally biased stretch (basic and acidic residues) spans 66 to 81; sequence GWEKRNESRPHARPRP. Residue N71 is glycosylated (N-linked (GlcNAc...) asparagine). UDP-alpha-D-glucuronate contacts are provided by residues 93–95, D124, R161, R166, and 191–193; these read PTY and DDD. Mn(2+) is bound at residue D193. The interaction with galactose moiety of substrate glycoprotein stretch occupies residues 240-249; that stretch reads WRADRPFAID. E279 acts as the Proton donor/acceptor in catalysis. N298 carries N-linked (GlcNAc...) asparagine glycosylation. 306–308 provides a ligand contact to UDP-alpha-D-glucuronate; the sequence is HTR.

Belongs to the glycosyltransferase 43 family. Homodimer. Mn(2+) is required as a cofactor.

The protein localises to the golgi apparatus membrane. It carries out the reaction 3-O-(beta-D-galactosyl-(1-&gt;3)-beta-D-galactosyl-(1-&gt;4)-beta-D-xylosyl)-L-seryl-[protein] + UDP-alpha-D-glucuronate = 3-O-(beta-D-GlcA-(1-&gt;3)-beta-D-Gal-(1-&gt;3)-beta-D-Gal-(1-&gt;4)-beta-D-Xyl)-L-seryl-[protein] + UDP + H(+). The protein operates within protein modification; protein glycosylation. Involved in the biosynthesis of L2/HNK-1 carbohydrate epitope on both glycolipids and glycoproteins. This is Galactosylgalactosylxylosylprotein 3-beta-glucuronosyltransferase 2 (B3GAT2) from Canis lupus familiaris (Dog).